We begin with the raw amino-acid sequence, 210 residues long: ATP-dependent Clp protease proteolytic subunit (210 aa).

Ser106 (nucleophile) is an active-site residue. The active site involves His131.

The protein belongs to the peptidase S14 family. In terms of assembly, fourteen ClpP subunits assemble into 2 heptameric rings which stack back to back to give a disk-like structure with a central cavity, resembling the structure of eukaryotic proteasomes.

Its subcellular location is the cytoplasm. The enzyme catalyses Hydrolysis of proteins to small peptides in the presence of ATP and magnesium. alpha-casein is the usual test substrate. In the absence of ATP, only oligopeptides shorter than five residues are hydrolyzed (such as succinyl-Leu-Tyr-|-NHMec, and Leu-Tyr-Leu-|-Tyr-Trp, in which cleavage of the -Tyr-|-Leu- and -Tyr-|-Trp bonds also occurs).. Functionally, cleaves peptides in various proteins in a process that requires ATP hydrolysis. Has a chymotrypsin-like activity. Plays a major role in the degradation of misfolded proteins. In Bradyrhizobium sp. (strain BTAi1 / ATCC BAA-1182), this protein is ATP-dependent Clp protease proteolytic subunit.